The primary structure comprises 608 residues: Glutamine--fructose-6-phosphate aminotransferase [isomerizing] (608 aa).

Cysteine 2 functions as the Nucleophile; for GATase activity in the catalytic mechanism. A Glutamine amidotransferase type-2 domain is found at 2–217; it reads CGIVGIVGTQ…DGDCAIVTRD (216 aa). SIS domains are found at residues 281–422 and 456–598; these read ADKA…ARGT and LSRD…VDQP. Lysine 603 (for Fru-6P isomerization activity) is an active-site residue.

Homodimer.

The protein resides in the cytoplasm. The enzyme catalyses D-fructose 6-phosphate + L-glutamine = D-glucosamine 6-phosphate + L-glutamate. Catalyzes the first step in hexosamine metabolism, converting fructose-6P into glucosamine-6P using glutamine as a nitrogen source. The chain is Glutamine--fructose-6-phosphate aminotransferase [isomerizing] from Agrobacterium fabrum (strain C58 / ATCC 33970) (Agrobacterium tumefaciens (strain C58)).